Here is a 748-residue protein sequence, read N- to C-terminus: Spidroin-1 (748 aa).

25 consecutive repeat copies span residues 1–25 (QGAG…GGQG), 26–38 (AGQG…GGQG), 39–66 (AGQG…GSQG), 67–96 (AGRG…GSQG), 97–130 (AGRG…GNQG), 131–158 (AGRG…GSQG), 159–191 (AGRG…GGQG), 192–204 (AGQG…GSQG), 205–235 (AGRG…GGQG), 236–262 (AGQG…GSQG), 263–292 (AGRG…GGQG), 293–305 (AGQG…GSQG), 306–333 (AGRG…GGQG), 334–360 (AGQG…GSQG), 361–394 (AGRG…GSQG), 395–424 (AGRG…GNQG), 425–458 (AGRG…GNQG), 459–485 (AGRG…GSQG), 486–512 (AGRG…RGQG), 513–525 (AGQG…GSQG), 526–555 (SGRG…GGQG), 556–582 (AGQG…GSQG), 583–612 (AGRG…GGQG), 613–642 (VGRG…VGSG), and 643–655 (ASAA…RLSS). The 25 X approximate tandem repeats stretch occupies residues 1–655 (QGAGAAAAAA…ASAAASRLSS (655 aa)).

This sequence belongs to the silk fibroin family. In terms of assembly, major subunit, with spidroin 2, of the dragline silk.

The protein localises to the secreted. It is found in the extracellular space. Spiders' major ampullate silk possesses unique characteristics of strength and elasticity. Fibroin consists of pseudocrystalline regions of antiparallel beta-sheet interspersed with elastic amorphous segments. In Trichonephila clavipes (Golden silk orbweaver), this protein is Spidroin-1.